The following is a 392-amino-acid chain: Lipid-A-disaccharide synthase (392 aa).

Belongs to the LpxB family.

The enzyme catalyses a lipid X + a UDP-2-N,3-O-bis[(3R)-3-hydroxyacyl]-alpha-D-glucosamine = a lipid A disaccharide + UDP + H(+). The protein operates within bacterial outer membrane biogenesis; LPS lipid A biosynthesis. Condensation of UDP-2,3-diacylglucosamine and 2,3-diacylglucosamine-1-phosphate to form lipid A disaccharide, a precursor of lipid A, a phosphorylated glycolipid that anchors the lipopolysaccharide to the outer membrane of the cell. The protein is Lipid-A-disaccharide synthase of Bradyrhizobium diazoefficiens (strain JCM 10833 / BCRC 13528 / IAM 13628 / NBRC 14792 / USDA 110).